A 306-amino-acid polypeptide reads, in one-letter code: Glutaminase (306 aa).

Serine 61, asparagine 111, glutamate 157, asparagine 164, tyrosine 188, tyrosine 240, and valine 258 together coordinate substrate.

This sequence belongs to the glutaminase family. As to quaternary structure, homotetramer.

The enzyme catalyses L-glutamine + H2O = L-glutamate + NH4(+). The sequence is that of Glutaminase from Psychrobacter cryohalolentis (strain ATCC BAA-1226 / DSM 17306 / VKM B-2378 / K5).